The chain runs to 479 residues: Cobyric acid synthase (479 aa).

Positions 250–442 (TRTVAVVAYP…LHGLFEDAAA (193 aa)) constitute a GATase cobBQ-type domain. C331 serves as the catalytic Nucleophile. H434 is an active-site residue.

The protein belongs to the CobB/CobQ family. CobQ subfamily.

It participates in cofactor biosynthesis; adenosylcobalamin biosynthesis. Catalyzes amidations at positions B, D, E, and G on adenosylcobyrinic A,C-diamide. NH(2) groups are provided by glutamine, and one molecule of ATP is hydrogenolyzed for each amidation. This is Cobyric acid synthase from Variovorax paradoxus (strain S110).